Consider the following 555-residue polypeptide: Formate--tetrahydrofolate ligase (555 aa).

Belongs to the formate--tetrahydrofolate ligase family.

The catalysed reaction is (6S)-5,6,7,8-tetrahydrofolate + formate + ATP = (6R)-10-formyltetrahydrofolate + ADP + phosphate. It participates in one-carbon metabolism; tetrahydrofolate interconversion. This Porphyromonas gingivalis (strain ATCC BAA-308 / W83) protein is Formate--tetrahydrofolate ligase.